A 994-amino-acid chain; its full sequence is MEAAHSKSTEECLSYFGVSETTGLTPDQVKRHLEKYGPNELPAEEGKSLWELVVEQFEDLLVRILLLAACISFVLAWFEEGEETVTAFVEPFVILLILIANAIVGVWQERNAENAIEALKEYEPEMGKVYRADRKSVQRIKARDIVPGDIVEVAVGDKVPADIRILSIKSTTLRVDQSILTGESVSVIKHTDPVPDPRAVNQDKKNMLFSGTNIAAGKAVGIVATTGVSTEIGKIRDQMAATEQDKTPLQQKLDEFGEQLSKVISLICVAVWLINIGHFNDPVHGGSWFRGAIYYFKIAVALAVAAIPEGLPAVITTCLALGTRRMAKKNAIVRSLPSVETLGCTSVICSDKTGTLTTNQMSVCKMFIIDKVDGDVCSLNEFSITGSTYAPEGEVLKNDKPVRAGQYDGLVELATICALCNDSSLDFNETKGVYEKVGEATETALTTLVEKMNVFNTEVRSLSKVERANACNSVIRQLMKKEFTLEFSRDRKSMSVYCSPAKSSRAAVGNKMFVKGAPEGVIDRCNYVRVGTTRVPLTGPVKEKIMSVIKEWGTGRDTLRCLALATRDTPPKREEMVLDDSAKFMEYEMDLTFVGVVGMLDPPRKEVTGSIQLCRDAGIRVIMITGDNKGTAIAICRRIGIFSENEEVTDRAYTGREFDDLPLAEQREACRRACCFARVEPSHKSKIVEYLQSYDEITAMTGDGVNDAPALKKAEIGIAMGSGTAVAKTASEMVLADDNFSTIVAAVEEGRAIYNNMKQFIRYLISSNVGEVVCIFLTAALGLPEALIPVQLLWVNLVTDGLPATALGFNPPDLDIMDRPPRSPKEPLISGWLFFRYMAIGGYVGAATVGAAAWWFLYAEDGPHVSYHQLTHFMQCTEHNPEFDGLDCEVFEAPEPMTMALSVLVTIEMCNALNSLSENQSLLRMPPWVNIWLLGSICLSMSLHFLILYVDPLPMIFKLRALDFTQWLMVLKISLPVIGLDELLKFIARNYLEG.

Over 1-48 (MEAAHSKSTEECLSYFGVSETTGLTPDQVKRHLEKYGPNELPAEEGKS) the chain is Cytoplasmic. The chain crosses the membrane as a helical span at residues 49 to 69 (LWELVVEQFEDLLVRILLLAA). Over 70–89 (CISFVLAWFEEGEETVTAFV) the chain is Lumenal. Residues 90-110 (EPFVILLILIANAIVGVWQER) traverse the membrane as a helical segment. At 111–253 (NAENAIEALK…QDKTPLQQKL (143 aa)) the chain is on the cytoplasmic side. A helical membrane pass occupies residues 254–273 (DEFGEQLSKVISLICVAVWL). Residues 274-295 (INIGHFNDPVHGGSWFRGAIYY) are Lumenal-facing. Residues 296–313 (FKIAVALAVAAIPEGLPA) traverse the membrane as a helical segment. Val-304, Ala-305, Ile-307, and Glu-309 together coordinate Ca(2+). Residues 314 to 757 (VITTCLALGT…EEGRAIYNNM (444 aa)) are Cytoplasmic-facing. The 4-aspartylphosphate intermediate role is filled by Asp-351. Mg(2+) is bound by residues Asp-351 and Thr-353. Thr-353 lines the ATP pocket. Phosphothreonine is present on Thr-441. ATP contacts are provided by Glu-442, Arg-489, Lys-515, and Arg-560. Phosphothreonine is present on Thr-569. Ser-581 carries the phosphoserine modification. Thr-625, Gly-626, and Asp-627 together coordinate ATP. Ser-643 carries the post-translational modification Phosphoserine. Arg-678 and Lys-684 together coordinate ATP. Asp-703 is a binding site for Mg(2+). Residue Asn-706 coordinates ATP. A helical transmembrane segment spans residues 758–777 (KQFIRYLISSNVGEVVCIFL). The Ca(2+) site is built by Asn-768 and Glu-771. Over 778–787 (TAALGLPEAL) the chain is Lumenal. The chain crosses the membrane as a helical span at residues 788 to 808 (IPVQLLWVNLVTDGLPATALG). The interval 788-808 (IPVQLLWVNLVTDGLPATALG) is interaction with PLN. The Ca(2+) site is built by Asn-796, Thr-799, and Asp-800. The Cytoplasmic portion of the chain corresponds to 809–828 (FNPPDLDIMDRPPRSPKEPL). The helical transmembrane segment at 829–851 (ISGWLFFRYMAIGGYVGAATVGA) threads the bilayer. Topologically, residues 852-897 (AAWWFLYAEDGPHVSYHQLTHFMQCTEHNPEFDGLDCEVFEAPEPM) are lumenal. A disulfide bridge links Cys-876 with Cys-888. A helical transmembrane segment spans residues 898–917 (TMALSVLVTIEMCNALNSLS). Residue Glu-908 participates in Ca(2+) binding. Over 918-930 (ENQSLLRMPPWVN) the chain is Cytoplasmic. Residues 931–949 (IWLLGSICLSMSLHFLILY) traverse the membrane as a helical segment. The segment at 932–943 (WLLGSICLSMSL) is interaction with PLN. The Lumenal segment spans residues 950–964 (VDPLPMIFKLRALDF). A helical membrane pass occupies residues 965–985 (TQWLMVLKISLPVIGLDELLK). The Cytoplasmic portion of the chain corresponds to 986–994 (FIARNYLEG).

This sequence belongs to the cation transport ATPase (P-type) (TC 3.A.3) family. Type IIA subfamily. Interacts with sarcolipin (SLN). Interacts with phospholamban (PLN). Interacts with myoregulin (MRLN). Interacts with DWORF. Interacts with VMP1. Requires Mg(2+) as cofactor.

The protein localises to the endoplasmic reticulum membrane. It is found in the sarcoplasmic reticulum membrane. It carries out the reaction Ca(2+)(in) + ATP + H2O = Ca(2+)(out) + ADP + phosphate + H(+). With respect to regulation, inhibited by sarcolipin (SLN) and myoregulin (MRLN). Has also been shown to be reversibly inhibited by phospholamban (PLN) at low calcium concentrations in vitro. Dephosphorylated PLN decreases the apparent affinity of the ATPase for calcium in vitro and this inhibition is regulated by the phosphorylation of PLN. Enhanced by DWORF; DWORF increases activity by displacing sarcolipin (SLN), phospholamban (PLN) and myoregulin (MRLN). Its function is as follows. Key regulator of striated muscle performance by acting as the major Ca(2+) ATPase responsible for the reuptake of cytosolic Ca(2+) into the sarcoplasmic reticulum. Catalyzes the hydrolysis of ATP coupled with the translocation of calcium from the cytosol to the sarcoplasmic reticulum lumen. Contributes to calcium sequestration involved in muscular excitation/contraction. The chain is Sarcoplasmic/endoplasmic reticulum calcium ATPase 1 (Atp2a1) from Mus musculus (Mouse).